The following is a 230-amino-acid chain: Ribonuclease 3 (230 aa).

The RNase III domain occupies 7–134 (LEELESKLGI…VIAAIYLDKG (128 aa)). E47 provides a ligand contact to Mg(2+). Residue D51 is part of the active site. Mg(2+)-binding residues include D120 and E123. The active site involves E123. One can recognise a DRBM domain in the interval 161 to 230 (DYKTRLQEIL…ACKALKGLDN (70 aa)).

Belongs to the ribonuclease III family. In terms of assembly, homodimer. Mg(2+) is required as a cofactor.

It localises to the cytoplasm. It carries out the reaction Endonucleolytic cleavage to 5'-phosphomonoester.. Functionally, digests double-stranded RNA. Involved in the processing of primary rRNA transcript to yield the immediate precursors to the large and small rRNAs (23S and 16S). Processes some mRNAs, and tRNAs when they are encoded in the rRNA operon. Processes pre-crRNA and tracrRNA of type II CRISPR loci if present in the organism. In Clostridium acetobutylicum (strain ATCC 824 / DSM 792 / JCM 1419 / IAM 19013 / LMG 5710 / NBRC 13948 / NRRL B-527 / VKM B-1787 / 2291 / W), this protein is Ribonuclease 3.